The sequence spans 231 residues: Ureidoacrylate amidohydrolase RutB (231 aa).

The Proton acceptor role is filled by Asp-25. The active site involves Lys-134. The active-site Nucleophile is the Cys-167.

Belongs to the isochorismatase family. RutB subfamily.

It carries out the reaction (Z)-3-ureidoacrylate + H2O + H(+) = (Z)-3-aminoacrylate + NH4(+) + CO2. The enzyme catalyses (Z)-3-ureidoacrylate + H2O = (Z)-3-aminoacrylate + carbamate + H(+). The catalysed reaction is (Z)-2-methylureidoacrylate + H2O + H(+) = (Z)-2-methylaminoacrylate + NH4(+) + CO2. Its function is as follows. Hydrolyzes ureidoacrylate to form aminoacrylate and carbamate. The carbamate hydrolyzes spontaneously, thereby releasing one of the nitrogen atoms of the pyrimidine ring as ammonia and one of its carbon atoms as CO2. This is Ureidoacrylate amidohydrolase RutB from Escherichia coli O9:H4 (strain HS).